The primary structure comprises 276 residues: Large ribosomal subunit protein uL2c (276 aa).

The interval 225–276 (AMNPVDHPHGGGEGRTPIGRKKPVTPWGYSALGKKSRKRNRYSDASILRRRE) is disordered.

It belongs to the universal ribosomal protein uL2 family. In terms of assembly, part of the 50S ribosomal subunit.

It is found in the plastid. The protein localises to the chloroplast. The protein is Large ribosomal subunit protein uL2c (rpl2) of Pinus thunbergii (Japanese black pine).